Here is a 227-residue protein sequence, read N- to C-terminus: Chalcone--flavanone isomerase (227 aa).

The substrate site is built by threonine 50, asparagine 115, and serine 192.

The protein belongs to the chalcone isomerase family. Fibers.

The enzyme catalyses a chalcone = a flavanone.. Its pathway is secondary metabolite biosynthesis; flavonoid biosynthesis. Functionally, catalyzes the intramolecular cyclization of bicyclic chalcones into tricyclic (S)-flavanones. Responsible for the isomerization of 4,2',4',6'-tetrahydroxychalcone (also termed chalcone) into naringenin. The sequence is that of Chalcone--flavanone isomerase (CHI) from Gossypium hirsutum (Upland cotton).